The sequence spans 165 residues: Large ribosomal subunit protein uL10 (165 aa).

The protein belongs to the universal ribosomal protein uL10 family. Part of the ribosomal stalk of the 50S ribosomal subunit. The N-terminus interacts with L11 and the large rRNA to form the base of the stalk. The C-terminus forms an elongated spine to which L12 dimers bind in a sequential fashion forming a multimeric L10(L12)X complex.

Forms part of the ribosomal stalk, playing a central role in the interaction of the ribosome with GTP-bound translation factors. The polypeptide is Large ribosomal subunit protein uL10 (Shewanella piezotolerans (strain WP3 / JCM 13877)).